The primary structure comprises 387 residues: Enoyl-[acyl-carrier-protein] reductase 2, mitochondrial (387 aa).

The N-terminal 23 residues, 1-23, are a transit peptide targeting the mitochondrion; the sequence is MYRNQLARASLRSTSSINQIRNM. Catalysis depends on Y79, which acts as the Proton donor. NADP(+)-binding positions include N172, 199-202, 222-224, 297-300, 322-324, and K382; these read NSAV, RDR, YGGM, and FWV.

This sequence belongs to the zinc-containing alcohol dehydrogenase family. Quinone oxidoreductase subfamily. Homodimer.

It localises to the mitochondrion matrix. It catalyses the reaction a 2,3-saturated acyl-[ACP] + NADP(+) = a (2E)-enoyl-[ACP] + NADPH + H(+). Catalyzes the NADPH-dependent reduction of trans-2-enoyl thioesters in mitochondrial fatty acid synthesis (fatty acid synthesis type II). Fatty acid chain elongation in mitochondria uses acyl carrier protein (ACP) as an acyl group carrier, but the enzyme accepts both ACP and CoA thioesters as substrates in vitro. Required for respiration and the maintenance of the mitochondrial compartment. In Debaryomyces hansenii (strain ATCC 36239 / CBS 767 / BCRC 21394 / JCM 1990 / NBRC 0083 / IGC 2968) (Yeast), this protein is Enoyl-[acyl-carrier-protein] reductase 2, mitochondrial (ETR2).